Here is a 320-residue protein sequence, read N- to C-terminus: MASSLQSKWICLRLNDAIIKRHVLVLSEYADLKYLGFEKYKFFEYVIFQFCNDPQLCKIIENNYNYCMQIFKAPADDMRDIRHNIKRAFKTPVLGHMCVLSNKPPMYSFLKEWFLLPHYKVVSLKSESLTWGFPHVVVFDLDSTLITEEEQVEIRDPFVYDSLQELHEMGCVLVLWSYGSRDHVAHSMRDVDLEGYFDIIISEGSTVQEERSDLVQNSHNAIVDYNLKKRFIENKFVFDIHNHRSDNNIPKSPKIVIKYLSDKNVNFFKSITLVDDLPTNNYAYDFYVKVKRCPTPVQDWEHYHNEIIQNIMDYEQYFIK.

In terms of assembly, interacts with VP1054, VP39 and VP80.

The protein resides in the virion. Its subcellular location is the host nucleus. It is found in the host cytoplasm. Plays a role in nucleocapsid assembly and is essential for viral replication. Distributed over the cylindrical capsid sheath of nucleocapsid. This is an uncharacterized protein from Lepidoptera (butterflies and moths).